Here is a 408-residue protein sequence, read N- to C-terminus: Multidrug resistance protein MdtG (408 aa).

10 consecutive transmembrane segments (helical) span residues 16–36 (LIVAWLGCFLTGAAFSLVMPF), 58–78 (IVFSITFLFSAIASPFWGGLA), 92–112 (LGMGIVMVLMGLAQNIWQFLI), 115–135 (ALLGLLGGFVPNANALIATQV), 146–166 (TLSTGGVSGALLGPMAGGLLA), 173–193 (PVFFITASVLILCFFVTLFCI), 224–244 (LFVTTLIIQVATGSIAPILTL), 256–276 (VAFISGMIASVPGVAALLSAP), 290–310 (ILITALIFSVLLLIPMSYVQT), and 378–398 (AVFLVTAGVVLFNAVYSWNSL).

It belongs to the major facilitator superfamily. DHA1 family. MdtG (TC 2.A.1.2.20) subfamily.

It localises to the cell inner membrane. In terms of biological role, confers resistance to fosfomycin and deoxycholate. This Escherichia coli O17:K52:H18 (strain UMN026 / ExPEC) protein is Multidrug resistance protein MdtG.